Here is a 668-residue protein sequence, read N- to C-terminus: DNA ligase (668 aa).

Residues 34-38 (DTEYD), 83-84 (SL), and Glu114 contribute to the NAD(+) site. Lys116 serves as the catalytic N6-AMP-lysine intermediate. NAD(+)-binding residues include Arg137, Glu171, Lys286, and Lys310. Cys404, Cys407, Cys422, and Cys427 together coordinate Zn(2+). The region spanning 588 to 668 (NSDSIIANKS…FFDLLKSEKG (81 aa)) is the BRCT domain.

Belongs to the NAD-dependent DNA ligase family. LigA subfamily. Mg(2+) serves as cofactor. Mn(2+) is required as a cofactor.

The enzyme catalyses NAD(+) + (deoxyribonucleotide)n-3'-hydroxyl + 5'-phospho-(deoxyribonucleotide)m = (deoxyribonucleotide)n+m + AMP + beta-nicotinamide D-nucleotide.. In terms of biological role, DNA ligase that catalyzes the formation of phosphodiester linkages between 5'-phosphoryl and 3'-hydroxyl groups in double-stranded DNA using NAD as a coenzyme and as the energy source for the reaction. It is essential for DNA replication and repair of damaged DNA. The sequence is that of DNA ligase from Mycoplasma mycoides subsp. mycoides SC (strain CCUG 32753 / NCTC 10114 / PG1).